A 1636-amino-acid polypeptide reads, in one-letter code: Tyrosine-protein phosphatase non-receptor type 23 (1636 aa).

The BRO1 domain occupies 8–394 (PMIWLDLKEA…AKIEDKNEVL (387 aa)). TPR repeat units lie at residues 250–283 (AVAHLHMGKQAEEQQKFGERVAYFQSALDKLNEA) and 374–407 (EEKAKLLREMMAKIEDKNEVLDQFMDSMQLDPET). Positions 550–623 (KAVLQNLKRI…VYLEQNLAAQ (74 aa)) form a coiled coil. A compositionally biased stretch (basic and acidic residues) spans 701-714 (EAARQQLLDRELKK). Disordered regions lie at residues 701 to 812 (EAAR…GPHA) and 888 to 1151 (QAPI…AAEG). A Phosphoserine modification is found at Ser733. Residues 770-1130 (HFPPSPFPSS…SSSPESQHGG (361 aa)) are his. 2 stretches are compositionally biased toward pro residues: residues 898–922 (RPNPTPAPPPPCFPVPPPQPLPTPY) and 950–962 (RIGPQPQPHPQPH). Arg950 carries the omega-N-methylarginine modification. 6 tandem repeats follow at residues 953–954 (PQ), 955–956 (PQ), 957–958 (PH), 959–960 (PQ), 961–962 (PH), and 963–964 (PS). The tract at residues 953–964 (PQPQPHPQPHPS) is 6 X 2 AA approximate tandem repeats of P-Q. Composition is skewed to pro residues over residues 983–1002 (LFPPQAPGLLPPQSPYPYAP), 1036–1050 (FPSPGPPQPPHPPLA), and 1083–1109 (HLVPSPAPSPGPGPVPPRPPAAEPPPC). Residues 1120 to 1131 (LSSSPESQHGGT) show a composition bias toward polar residues. 2 positions are modified to phosphoserine: Ser1122 and Ser1123. Thr1131 bears the Phosphothreonine mark. Positions 1192–1452 (DTVWRELQDA…RFCYEAVVRH (261 aa)) constitute a Tyrosine-protein phosphatase domain. The active-site Phosphocysteine intermediate is Cys1392. Positions 1513–1636 (LESPVASLPG…LDPLWTLNKT (124 aa)) are disordered. Pro residues-rich tracts occupy residues 1523 to 1533 (PAEPPGLPPAS) and 1542 to 1556 (SSSPPPLSSPLPEAP). Residues 1567-1587 (APSSGPPSSSLELLASLTPEA) are compositionally biased toward low complexity. Arg1615 carries the post-translational modification Omega-N-methylarginine.

Belongs to the protein-tyrosine phosphatase family. Non-receptor class subfamily. As to quaternary structure, interacts with GRAP2 and GRB2. Interacts with UBAP1. Interacts with CHMP4B.

It is found in the nucleus. It localises to the cytoplasm. Its subcellular location is the cytoplasmic vesicle. The protein resides in the endosome. The protein localises to the cytoskeleton. It is found in the cilium basal body. It localises to the early endosome. The catalysed reaction is O-phospho-L-tyrosyl-[protein] + H2O = L-tyrosyl-[protein] + phosphate. In terms of biological role, plays a role in sorting of endocytic ubiquitinated cargos into multivesicular bodies (MVBs) via its interaction with the ESCRT-I complex (endosomal sorting complex required for transport I), and possibly also other ESCRT complexes. May act as a negative regulator of Ras-mediated mitogenic activity. Plays a role in ciliogenesis. The protein is Tyrosine-protein phosphatase non-receptor type 23 (PTPN23) of Homo sapiens (Human).